We begin with the raw amino-acid sequence, 273 residues long: Mitochondrial distribution and morphology protein 12 (273 aa).

One can recognise an SMP-LTD domain in the interval 1–260 (MSFDINWEQL…WPSWINFDFY (260 aa)). Residues 76 to 98 (MSAEEETEGSDDEGYGGDRVRNR) form a disordered region. Residues 78–90 (AEEETEGSDDEGY) show a composition bias toward acidic residues.

This sequence belongs to the MDM12 family. In terms of assembly, component of the ER-mitochondria encounter structure (ERMES) or MDM complex, composed of MMM1, MDM10, MDM12 and MDM34. An MMM1 homodimer associates with one molecule of MDM12 on each side in a pairwise head-to-tail manner, and the SMP-LTD domains of MMM1 and MDM12 generate a continuous hydrophobic tunnel for phospholipid trafficking.

The protein localises to the mitochondrion outer membrane. The protein resides in the endoplasmic reticulum membrane. Component of the ERMES/MDM complex, which serves as a molecular tether to connect the endoplasmic reticulum (ER) and mitochondria. Components of this complex are involved in the control of mitochondrial shape and protein biogenesis, and function in nonvesicular lipid trafficking between the ER and mitochondria. MDM12 is required for the interaction of the ER-resident membrane protein MMM1 and the outer mitochondrial membrane-resident beta-barrel protein MDM10. The MDM12-MMM1 subcomplex functions in the major beta-barrel assembly pathway that is responsible for biogenesis of all mitochondrial outer membrane beta-barrel proteins, and acts in a late step after the SAM complex. The MDM10-MDM12-MMM1 subcomplex further acts in the TOM40-specific pathway after the action of the MDM12-MMM1 complex. Essential for establishing and maintaining the structure of mitochondria and maintenance of mtDNA nucleoids. The polypeptide is Mitochondrial distribution and morphology protein 12 (Vanderwaltozyma polyspora (strain ATCC 22028 / DSM 70294 / BCRC 21397 / CBS 2163 / NBRC 10782 / NRRL Y-8283 / UCD 57-17) (Kluyveromyces polysporus)).